The chain runs to 180 residues: Large ribosomal subunit protein uL5 (180 aa).

This sequence belongs to the universal ribosomal protein uL5 family. In terms of assembly, part of the 50S ribosomal subunit; part of the 5S rRNA/L5/L18/L25 subcomplex. Contacts the 5S rRNA and the P site tRNA. Forms a bridge to the 30S subunit in the 70S ribosome.

Functionally, this is one of the proteins that bind and probably mediate the attachment of the 5S RNA into the large ribosomal subunit, where it forms part of the central protuberance. In the 70S ribosome it contacts protein S13 of the 30S subunit (bridge B1b), connecting the 2 subunits; this bridge is implicated in subunit movement. Contacts the P site tRNA; the 5S rRNA and some of its associated proteins might help stabilize positioning of ribosome-bound tRNAs. In Synechocystis sp. (strain ATCC 27184 / PCC 6803 / Kazusa), this protein is Large ribosomal subunit protein uL5.